A 256-amino-acid chain; its full sequence is Imidazole glycerol phosphate synthase subunit HisF (256 aa).

Active-site residues include D12 and D131.

It belongs to the HisA/HisF family. Heterodimer of HisH and HisF.

The protein resides in the cytoplasm. The enzyme catalyses 5-[(5-phospho-1-deoxy-D-ribulos-1-ylimino)methylamino]-1-(5-phospho-beta-D-ribosyl)imidazole-4-carboxamide + L-glutamine = D-erythro-1-(imidazol-4-yl)glycerol 3-phosphate + 5-amino-1-(5-phospho-beta-D-ribosyl)imidazole-4-carboxamide + L-glutamate + H(+). It functions in the pathway amino-acid biosynthesis; L-histidine biosynthesis; L-histidine from 5-phospho-alpha-D-ribose 1-diphosphate: step 5/9. In terms of biological role, IGPS catalyzes the conversion of PRFAR and glutamine to IGP, AICAR and glutamate. The HisF subunit catalyzes the cyclization activity that produces IGP and AICAR from PRFAR using the ammonia provided by the HisH subunit. The protein is Imidazole glycerol phosphate synthase subunit HisF of Azotobacter vinelandii (strain DJ / ATCC BAA-1303).